Consider the following 545-residue polypeptide: Probable intron-encoded endonuclease 4 (545 aa).

7 helical membrane-spanning segments follow: residues 1–21, 30–50, 81–101, 119–139, 140–160, 177–197, and 200–220; these read MYLSIIILPLLGSIVAGFFGR, LITCLSVIITTGLAILAFFEV, LTVAMLIPVLIISSLVHIYSI, LFTFMMIILVTANNYLLMFVG, WEGVGVCSYLLVSFWFTRIAA, FLTIGMFVVLWTLGNLDYATV, and LAPYINSDIATIIGICLLIGA. Residues 1–239 form a ndh-5 exons 1 and 2 encoded region; that stretch reads MYLSIIILPL…HVWLPMAMEG (239 aa). The tract at residues 240–545 is ndh-5 intron 2 encoded; it reads FFSRAFLKLH…NNINKSDYNK (306 aa).

The protein in the N-terminal section; belongs to the complex I subunit 5 family. This sequence in the C-terminal section; belongs to the LAGLIDADG endonuclease family.

It is found in the mitochondrion membrane. In terms of biological role, mitochondrial DNA endonuclease involved in intron homing. The protein is Probable intron-encoded endonuclease 4 of Neurospora crassa (strain ATCC 24698 / 74-OR23-1A / CBS 708.71 / DSM 1257 / FGSC 987).